The primary structure comprises 119 residues: Probable cyclase otaY (119 aa).

This sequence belongs to the aurE cyclase family.

It participates in mycotoxin biosynthesis. Functionally, probable cyclase; part of the gene cluster that mediates the biosynthesis of ochratoxin A (OTA), a mycotoxin composed of a chlorinated type I polyketide dihydroisocoumarin moiety linked to L-phenylalanine, and demonstrated to have nephrotoxic, immunotoxic, genotoxic, neurotoxic, and teratogenic properties. OtaY is probably involved in the polyketide cyclization. The pathway begins with the highly reducing polyketide synthase otaA that catalyzes the formation of the isocoumarin group during the initial stages of biosynthesis, starting from one acetate and 4 malonate units, to originate the characteristic pentaketide skeleton 7-methylmellein (7-MM) of the OTA molecule. The newly identified cyclase otaY might be involved in the polyketide cyclization reaction during the initial steps of the OTA biosynthesis. 7-MM is then oxidized into 7-carboxymellein (also called ochratoxin beta) by the cytochrome P450 monooxygenase otaC. The NRPS encoded by the otaB gene is involved in the linking of phenylalanine to the dihydroisocoumarin ring. The reaction catalyzed by NRPS results in the production of ochratoxin B (OTB), which is the non-chlorinated analog of OTA and which subsequently serves as the substrate of the halogenase otaD for chlorination activity to form the final molecular structure of OTA, containing a chlorine atom in the C-5 position of the molecule. The chain is Probable cyclase otaY from Aspergillus niger (strain ATCC MYA-4892 / CBS 513.88 / FGSC A1513).